The primary structure comprises 342 residues: MNIGIVNDLPLAVEALRRTIALRPEHRVLWVATDGAQALDFCVAQPPDLVLMDLVMPRIDGVSATRSIMERSPCAILIVTANVGANASYVYEAMGAGALDAVDTPTLEQGGSADPSQPLLAKIDQIGRLLATRMPLAAPAAAAPAPQGALPPLVAIGASAGGPTALTALLRRLPDDFPAALVIVQHVDQAFAIGMAQWLDGYSPLPVRIARQGSVPQAGEVLLAATNDHLHLTSRGVLAYTRRPEETPYRPSVDVFFHSVVDHWKGEAIGVLLTGMGRDGALGLKAMRTKGHYTIAQDEATSAVYGMPKAAAAIGAASAVLPLERIADQLISLVQRNRQRWR.

The Response regulatory domain occupies 2-119 (NIGIVNDLPL…GGSADPSQPL (118 aa)). Position 53 is a 4-aspartylphosphate (Asp53). The 194-residue stretch at 144–337 (PAPQGALPPL…DQLISLVQRN (194 aa)) folds into the CheB-type methylesterase domain. Residues Ser159, His186, and Asp279 contribute to the active site.

The protein belongs to the CheB family. In terms of processing, phosphorylated by CheA. Phosphorylation of the N-terminal regulatory domain activates the methylesterase activity.

It localises to the cytoplasm. The catalysed reaction is [protein]-L-glutamate 5-O-methyl ester + H2O = L-glutamyl-[protein] + methanol + H(+). It catalyses the reaction L-glutaminyl-[protein] + H2O = L-glutamyl-[protein] + NH4(+). Involved in chemotaxis. Part of a chemotaxis signal transduction system that modulates chemotaxis in response to various stimuli. Catalyzes the demethylation of specific methylglutamate residues introduced into the chemoreceptors (methyl-accepting chemotaxis proteins or MCP) by CheR. Also mediates the irreversible deamidation of specific glutamine residues to glutamic acid. The sequence is that of Protein-glutamate methylesterase/protein-glutamine glutaminase 2 from Burkholderia mallei (strain ATCC 23344).